Reading from the N-terminus, the 444-residue chain is C4-dicarboxylate transport protein (444 aa).

The next 9 helical transmembrane spans lie at 15–35 (VIVA…FGVA), 46–66 (LIKM…IAGM), 78–98 (YALL…LIVV), 143–163 (IVGA…VIFG), 199–219 (PIGA…GSLV), 224–244 (LMIC…GGIA), 291–311 (VVGL…AIYL), 332–352 (ITLL…TGSG), and 354–374 (IVLA…LALI). The disordered stretch occupies residues 422–444 (GIADTRPEDDLGVAEGPTPSNVK).

Belongs to the dicarboxylate/amino acid:cation symporter (DAACS) (TC 2.A.23) family.

The protein resides in the cell inner membrane. Functionally, responsible for the transport of dicarboxylates such as succinate, fumarate, and malate from the periplasm across the membrane. This is C4-dicarboxylate transport protein from Pseudomonas fluorescens (strain Pf0-1).